A 201-amino-acid chain; its full sequence is MENQVSSFLIDSPMEWKTYMKSLSDDNPSFGDVTVNLTKISVSSKNAKSYAEEMYNYVTQEMVFISERSRLLLRAKRRLYKNQSLMKKTSVSTSNTVKMVFMSLAKQIEQMLKFCMMVYSKLCEAFETTLKVAKEFQICDSSQEWFFQFQLGYHRKQMELQMLSFVAEWLVLTQHYTDALNDSAKTLYDIMESSHKAAQKV.

It is found in the nucleus. Required for correct meiotic chromosome segregation and recombination. The protein is Twin horsetail protein 2 (tht2) of Schizosaccharomyces pombe (strain 972 / ATCC 24843) (Fission yeast).